The chain runs to 434 residues: Zinc carboxypeptidase (434 aa).

A signal peptide spans 1–33 (MSPKRRRLMAAALGACVALVLPLHAGSAQPSTA). Residues 34–114 (KTPERTVFEV…DFTDPQVGTQ (81 aa)) constitute a propeptide, activation peptide. One can recognise a Peptidase M14 domain in the interval 122–423 (GYHNFQETVT…SAVELFLSYS (302 aa)). Residues histidine 183 and glutamate 186 each contribute to the Zn(2+) site. A disordered region spans residues 270–295 (GSSSSGSSETTAARRRSPPRRSPHPH). The span at 282 to 293 (ARRRSPPRRSPH) shows a compositional bias: basic residues. Histidine 315 is a binding site for Zn(2+). Glutamate 388 functions as the Proton donor/acceptor in the catalytic mechanism.

The protein belongs to the peptidase M14 family. The cofactor is Zn(2+).

It catalyses the reaction Releases a C-terminal residue, which may be hydrophobic or positively charged.. In terms of biological role, carboxypeptidase that possesses the specificities of both mammalian Cpase A and B. Thus shows broad substrate specificity, being able to cleave Cbz-Gly-Leu, Cbz-Gly-Val, Cbz-Gly-Phe, Cbz-Gly-Lys and Bz-Gly-Arg in vitro. The protein is Zinc carboxypeptidase of Saccharothrix mutabilis subsp. capreolus (Streptomyces capreolus).